A 438-amino-acid chain; its full sequence is Trigger factor (438 aa).

The 86-residue stretch at 163–248 (GDIITIDYEG…VKEIKRKELA (86 aa)) folds into the PPIase FKBP-type domain.

The protein belongs to the FKBP-type PPIase family. Tig subfamily.

It is found in the cytoplasm. It carries out the reaction [protein]-peptidylproline (omega=180) = [protein]-peptidylproline (omega=0). Its function is as follows. Involved in protein export. Acts as a chaperone by maintaining the newly synthesized protein in an open conformation. Functions as a peptidyl-prolyl cis-trans isomerase. This is Trigger factor from Desulforudis audaxviator (strain MP104C).